Here is a 664-residue protein sequence, read N- to C-terminus: NQLADGSWGDAGTFSIFDRILNTLACVVALRSWNIHPHKTDKGIWFMKKNMCRIDEENLEHMPIGFEVALPSLIDIAKKLEIDIPTQTRGLQEIYARREIKLKKIPRDIMHQVPTTLLHSLEGMAGLKWEKLLKLQSEDGSFLFSPSSTAFALQQTRDHNCLKYLTNHIHKFNGGVPNVYPVDLFEHLWAVDRLQRLGLSRYFEPEIEECIAYVHRQWTEKGICWARNSQVEDIDDTAMGFRLLRLHGYEVSADVFRHFKSDGGEFFCFKGQSTQAVTGMYNLYRASQLMFPGENILVDAARFSANFLQLKRAKNDLLDKWIITKDLPGEVGYALDVPWYASLPRVETRFYLDQYGGDDDVWIGKTLYRMPYVNNNKYLELAKLDYNNCQALHQQEWQNILKWYRSCSLGEFGMTERSLLQTYYVAAASVFEPEKSQERLAWAKTAILMETITSHFEFQQLSRDQKRAFITEFEHDSILKYTNGGRYKRRSSLVGTLVRTLNHLSLDILLAHGRDIHQPLKNAWCKWLNSWEEGGDAELLVRTLNLMSGGGRRRRWASEELLSSNPKHEQLLKATIGVCDKLRLFLRRKVQGGNGCMNATGMTTVEIESEMRELVKLVVTRSSSEDLDSEIKQNFLTIARSFYYAAYCNQGTINFHIAKVLFEK.

K101 serves as a coordination point for substrate. Mg(2+) is bound by residues D233 and D235. The short motif at 233–236 is the DXDD motif element; sequence DIDD. Residue K320 participates in substrate binding.

This sequence belongs to the terpene synthase family. Tpsc subfamily. Mg(2+) serves as cofactor. In terms of tissue distribution, ubiquitous expression in roots, stems, leaves and flowers.

It is found in the plastid. It localises to the chloroplast. The catalysed reaction is (2E,6E,10E)-geranylgeranyl diphosphate = ent-copalyl diphosphate. It functions in the pathway secondary metabolite biosynthesis; terpenoid biosynthesis. Functionally, involved in the biosynthesis of ent-kaurene diterpenoids natural products such as oridonin, miltiradiene, eriocalyxin B and nezukol, known to exhibit antitumor, anti-inflammatory and antibacterial activities. Catalyzes the conversion of (2E,6E,10E)-geranylgeranyl diphosphate (GGPP) to ent-copalyl diphosphate (ent-CPP). The sequence is that of Ent-copalyl diphosphate synthase 5 from Isodon rubescens (Rabdosia rubescens).